The primary structure comprises 659 residues: Mannosyl-oligosaccharide 1,2-alpha-mannosidase IA (659 aa).

Over 1 to 48 (MPVGGLLPLFSSPAGGGLGGGLGGGLGGGGGGGGRKGSGPSAFRLTEK) the chain is Cytoplasmic. Residues 49–69 (FVLLLVFSAFITLCFGAIFFL) form a helical; Signal-anchor for type II membrane protein membrane-spanning segment. Over 70-659 (PDSSKLLSGV…NIKKVEDNEK (590 aa)) the chain is Lumenal. Residues 88-121 (QPAADHKPGPGARAEDAADGRARPGEEGAPGDPA) are disordered. Residues 91–113 (ADHKPGPGARAEDAADGRARPGE) show a composition bias toward basic and acidic residues. A disulfide bridge links Cys-482 with Cys-514. The active-site Proton donor is the Glu-528. Thr-639 contacts Ca(2+).

This sequence belongs to the glycosyl hydrolase 47 family. Requires Ca(2+) as cofactor.

The protein localises to the endoplasmic reticulum membrane. The catalysed reaction is N(4)-(alpha-D-Man-(1-&gt;2)-alpha-D-Man-(1-&gt;2)-alpha-D-Man-(1-&gt;3)-[alpha-D-Man-(1-&gt;2)-alpha-D-Man-(1-&gt;3)-[alpha-D-Man-(1-&gt;2)-alpha-D-Man-(1-&gt;6)]-alpha-D-Man-(1-&gt;6)]-beta-D-Man-(1-&gt;4)-beta-D-GlcNAc-(1-&gt;4)-beta-D-GlcNAc)-L-asparaginyl-[protein] (N-glucan mannose isomer 9A1,2,3B1,2,3) + 4 H2O = N(4)-(alpha-D-Man-(1-&gt;3)-[alpha-D-Man-(1-&gt;3)-[alpha-D-Man-(1-&gt;6)]-alpha-D-Man-(1-&gt;6)]-beta-D-Man-(1-&gt;4)-beta-D-GlcNAc-(1-&gt;4)-beta-D-GlcNAc)-L-asparaginyl-[protein] (N-glucan mannose isomer 5A1,2) + 4 beta-D-mannose. The enzyme catalyses N(4)-(alpha-D-Man-(1-&gt;2)-alpha-D-Man-(1-&gt;2)-alpha-D-Man-(1-&gt;3)-[alpha-D-Man-(1-&gt;3)-[alpha-D-Man-(1-&gt;2)-alpha-D-Man-(1-&gt;6)]-alpha-D-Man-(1-&gt;6)]-beta-D-Man-(1-&gt;4)-beta-D-GlcNAc-(1-&gt;4)-beta-D-GlcNAc)-L-asparaginyl-[protein] (N-glucan mannose isomer 8A1,2,3B1,3) + 3 H2O = N(4)-(alpha-D-Man-(1-&gt;3)-[alpha-D-Man-(1-&gt;3)-[alpha-D-Man-(1-&gt;6)]-alpha-D-Man-(1-&gt;6)]-beta-D-Man-(1-&gt;4)-beta-D-GlcNAc-(1-&gt;4)-beta-D-GlcNAc)-L-asparaginyl-[protein] (N-glucan mannose isomer 5A1,2) + 3 beta-D-mannose. It participates in protein modification; protein glycosylation. Its activity is regulated as follows. Inhibited by both 1-deoxymannojirimycin and kifunensine. Its function is as follows. Involved in the maturation of Asn-linked oligosaccharides. Progressively trim alpha-1,2-linked mannose residues from Man(9)GlcNAc(2) to produce Man(5)GlcNAc(2). The sequence is that of Mannosyl-oligosaccharide 1,2-alpha-mannosidase IA (MAN1A1) from Sus scrofa (Pig).